Consider the following 63-residue polypeptide: High-potential iron-sulfur protein (63 aa).

[4Fe-4S] cluster-binding residues include Cys23, Cys26, Cys41, and Cys56.

Belongs to the high-potential iron-sulfur protein (HiPIP) family. In terms of assembly, homodimer.

Its function is as follows. Specific class of high-redox-potential 4Fe-4S ferredoxins. Functions in anaerobic electron transport in most purple and in some other photosynthetic bacteria and in at least one genus (Paracoccus) of halophilic, denitrifying bacteria. This is High-potential iron-sulfur protein (hip) from Rhodocyclus tenuis (Rhodospirillum tenue).